Here is a 290-residue protein sequence, read N- to C-terminus: tRNA (adenine(58)-N(1))-methyltransferase catalytic subunit TRMT61A (290 aa).

The residue at position 2 (Ser2) is an N-acetylserine. 5 substrate regions span residues 20–22, 35–42, 64–65, 85–89, and 110–117; these read LGH, QTQTRHGV, GW, QILYS, and SGTGSGSV. Residues Leu87, 114–116, Glu135, Arg140, 163–164, and Asp181 contribute to the S-adenosyl-L-methionine site; these read SGS and DV. Substrate regions lie at residues 180–183 and 205–212; these read LDIP and SFSPCIEQ. Thr279 lines the substrate pocket.

This sequence belongs to the class I-like SAM-binding methyltransferase superfamily. TRM61 family. In terms of assembly, heterotetramer; composed of two copies of TRMT6 and two copies of TRMT61A.

It localises to the nucleus. The enzyme catalyses adenosine(58) in tRNA + S-adenosyl-L-methionine = N(1)-methyladenosine(58) in tRNA + S-adenosyl-L-homocysteine + H(+). It catalyses the reaction an adenosine in mRNA + S-adenosyl-L-methionine = an N(1)-methyladenosine in mRNA + S-adenosyl-L-homocysteine + H(+). Catalytic subunit of tRNA (adenine-N(1)-)-methyltransferase, which catalyzes the formation of N(1)-methyladenine at position 58 (m1A58) in initiator methionyl-tRNA. Catalytic subunit of mRNA N(1)-methyltransferase complex, which mediates methylation of adenosine residues at the N(1) position of a small subset of mRNAs: N(1) methylation takes place in tRNA T-loop-like structures of mRNAs and is only present at low stoichiometries. This Rattus norvegicus (Rat) protein is tRNA (adenine(58)-N(1))-methyltransferase catalytic subunit TRMT61A (Trmt61a).